Reading from the N-terminus, the 248-residue chain is DNA polymerase sliding clamp 2 (248 aa).

The protein belongs to the PCNA family. Homotrimer. The subunits circularize to form a toroid; DNA passes through its center. Replication factor C (RFC) is required to load the toroid on the DNA.

In terms of biological role, sliding clamp subunit that acts as a moving platform for DNA processing. Responsible for tethering the catalytic subunit of DNA polymerase and other proteins to DNA during high-speed replication. In Sulfurisphaera ohwakuensis, this protein is DNA polymerase sliding clamp 2.